The primary structure comprises 361 residues: DNA replication and repair protein RecF (361 aa).

30–37 serves as a coordination point for ATP; sequence GANGSGKT.

The protein belongs to the RecF family.

Its subcellular location is the cytoplasm. In terms of biological role, the RecF protein is involved in DNA metabolism; it is required for DNA replication and normal SOS inducibility. RecF binds preferentially to single-stranded, linear DNA. It also seems to bind ATP. This Pectobacterium atrosepticum (strain SCRI 1043 / ATCC BAA-672) (Erwinia carotovora subsp. atroseptica) protein is DNA replication and repair protein RecF.